Here is a 430-residue protein sequence, read N- to C-terminus: Zinc finger and SCAN domain-containing protein 4 (430 aa).

Positions 1-38 are disordered; sequence MASDLRISFQGEPSRNDPGSENLEHKPSQGPAVQEEEE. One can recognise an SCAN box domain in the interval 44–126; sequence RTQLSLLQNS…KFMEDLTDES (83 aa). Residues 164–185 are compositionally biased toward polar residues; sequence GSPTGTDMETPSWTPQDTSLET. Disordered regions lie at residues 164 to 196, 224 to 257, and 281 to 300; these read GSPT…KENG, YPRP…SLKG, and EPVP…GHQE. 4 C2H2-type zinc fingers span residues 309–331, 337–359, 365–387, and 393–415; these read YRCE…QRRH, FTCA…QKIH, FTCS…ERIH, and YECS…LRNH.

It localises to the nucleus. It is found in the chromosome. Its subcellular location is the telomere. Its function is as follows. Embryonic stem (ES) cell-specific transcription factor required to regulate ES cell pluripotency. Binds telomeres and plays a key role in genomic stability in ES cells by regulating telomere elongation. Acts as an activator of spontaneous telomere sister chromatid exchange (T-SCE) and telomere elongation in undifferentiated ES cells. This Ailuropoda melanoleuca (Giant panda) protein is Zinc finger and SCAN domain-containing protein 4 (ZSCAN4).